Here is a 149-residue protein sequence, read N- to C-terminus: Large ribosomal subunit protein bL9 (149 aa).

Belongs to the bacterial ribosomal protein bL9 family.

In terms of biological role, binds to the 23S rRNA. The chain is Large ribosomal subunit protein bL9 from Magnetococcus marinus (strain ATCC BAA-1437 / JCM 17883 / MC-1).